A 129-amino-acid chain; its full sequence is Putative pre-16S rRNA nuclease (129 aa).

The protein belongs to the YqgF nuclease family.

The protein resides in the cytoplasm. Its function is as follows. Could be a nuclease involved in processing of the 5'-end of pre-16S rRNA. The protein is Putative pre-16S rRNA nuclease of Campylobacter jejuni subsp. doylei (strain ATCC BAA-1458 / RM4099 / 269.97).